A 271-amino-acid polypeptide reads, in one-letter code: Very long chain fatty acid elongase 3 (271 aa).

An N-linked (GlcNAc...) asparagine glycan is attached at asparagine 6. Helical transmembrane passes span phenylalanine 30 to valine 50, proline 67 to tryptophan 87, phenylalanine 116 to isoleucine 136, proline 141 to tyrosine 161, valine 165 to threonine 187, leucine 199 to isoleucine 219, and histidine 236 to histidine 256.

Belongs to the ELO family. ELOVL3 subfamily. Interacts with TECR. In terms of processing, N-Glycosylated. As to expression, expressed in brown adipose tissue and liver. In the skin, strong expressed in the cells of the inner layer of the outer root sheath of the hair follicles and in the sebocytes of the sebaceous glands. Hardly detectable in the epidermis and not at all in fibroblasts.

The protein resides in the endoplasmic reticulum membrane. It carries out the reaction a very-long-chain acyl-CoA + malonyl-CoA + H(+) = a very-long-chain 3-oxoacyl-CoA + CO2 + CoA. The catalysed reaction is eicosanoyl-CoA + malonyl-CoA + H(+) = 3-oxodocosanoyl-CoA + CO2 + CoA. The enzyme catalyses hexadecanoyl-CoA + malonyl-CoA + H(+) = 3-oxooctadecanoyl-CoA + CO2 + CoA. It catalyses the reaction octadecanoyl-CoA + malonyl-CoA + H(+) = 3-oxoeicosanoyl-CoA + CO2 + CoA. It carries out the reaction (9Z)-octadecenoyl-CoA + malonyl-CoA + H(+) = 3-oxo-(11Z)-eicosenoyl-CoA + CO2 + CoA. The catalysed reaction is (9Z,12Z)-octadecadienoyl-CoA + malonyl-CoA + H(+) = (11Z,14Z)-3-oxoicosa-11,14-dienoyl-CoA + CO2 + CoA. The enzyme catalyses (9Z,12Z,15Z)-octadecatrienoyl-CoA + malonyl-CoA + H(+) = (11Z,14Z,17Z)-3-oxoeicosatrienoyl-CoA + CO2 + CoA. It catalyses the reaction docosanoyl-CoA + malonyl-CoA + H(+) = 3-oxotetracosanoyl-CoA + CO2 + CoA. It carries out the reaction tetradecanoyl-CoA + malonyl-CoA + H(+) = 3-oxohexadecanoyl-CoA + CO2 + CoA. Its pathway is lipid metabolism; polyunsaturated fatty acid biosynthesis. Functionally, catalyzes the first and rate-limiting reaction of the four reactions that constitute the long-chain fatty acids elongation cycle. This endoplasmic reticulum-bound enzymatic process allows the addition of 2 carbons to the chain of long- and very long-chain fatty acids (VLCFAs) per cycle. Condensing enzyme that exhibits activity toward saturated and unsaturated acyl-CoA substrates with higher activity toward C18 acyl-CoAs, especially C18:0 acyl-CoAs. May participate in the production of saturated and monounsaturated VLCFAs of different chain lengths that are involved in multiple biological processes as precursors of membrane lipids and lipid mediators. Participates in the formation of certain VLCFA and triglycerides in certain cells of the hair follicles and the sebaceous glands, required for skin barrier function. Critical enzyme for lipid accumulation and metabolic activity in brown adipocytes during the early phase of the tissue recruitment. Plays a role in lipid storage and in resistance to diet-induced obesity. In Mus musculus (Mouse), this protein is Very long chain fatty acid elongase 3.